The primary structure comprises 98 residues: Small ribosomal subunit protein uS19 (98 aa).

The disordered stretch occupies residues threonine 77–lysine 98.

Belongs to the universal ribosomal protein uS19 family.

Protein S19 forms a complex with S13 that binds strongly to the 16S ribosomal RNA. In Chlorobium phaeobacteroides (strain DSM 266 / SMG 266 / 2430), this protein is Small ribosomal subunit protein uS19.